A 608-amino-acid chain; its full sequence is Serine/threonine-protein kinase ROP17 (608 aa).

The N-terminal stretch at 1 to 21 (MELVLCFVIITISGVIRESSA) is a signal peptide. Asparagine 76 carries an N-linked (GlcNAc...) asparagine glycan. A Protein kinase domain is found at 283 to 579 (LKKRGFLGGG…QQALEQFSLL (297 aa)). ATP-binding positions include 289–297 (LGGGGFGLV) and lysine 312. Aspartate 436 serves as the catalytic Proton acceptor.

Belongs to the protein kinase superfamily. Ser/Thr protein kinase family. As to quaternary structure, interacts with ROP5; interaction with ROP5 does not affect kinase activity. Interacts with human BCL2; the interaction probably promotes BCL2 phosphorylation and degradation.

It is found in the secreted. It localises to the cytoplasmic vesicle. The protein resides in the secretory vesicle. The protein localises to the rhoptry. Its subcellular location is the parasitophorous vacuole membrane. The catalysed reaction is L-threonyl-[protein] + ATP = O-phospho-L-threonyl-[protein] + ADP + H(+). It carries out the reaction L-seryl-[protein] + ATP = O-phospho-L-seryl-[protein] + ADP + H(+). Its function is as follows. Protein kinase. Virulence factor. Promotes migration of Toxoplasma-infected macrophages through collagen matrix, facilitating parasite transport through tissues and systemic dissemination. Plays a role in the translocation of dense granule effectors, such as GRA16 and GRA24, across the parasitophorous vacuole membrane in Toxoplasma-infected host cells. Phosphorylates mouse IRGB6 (TGTP1/TGTP2), an immunity-related GTPase (IRG) that protects mice from infection by certain intracellular pathogens; the phosphorylation leads to the disassembly of IRGB6 polymers into monomers and dimers. May modulate gene expression in human cells. Promotes autophagy in human cells via modulation of the BCL2-BECN1 pathway. The protein is Serine/threonine-protein kinase ROP17 of Toxoplasma gondii.